A 180-amino-acid polypeptide reads, in one-letter code: Putative manganese efflux pump MntP (180 aa).

The next 6 helical transmembrane spans lie at 6-26 (LMAL…GIGL), 34-54 (ILQI…TGWL), 67-87 (AAVI…WAAW), 102-122 (FWGL…AGFT), 131-151 (LLAA…GLVF), and 160-180 (GERA…KLFF).

Belongs to the MntP (TC 9.B.29) family.

The protein resides in the cell membrane. Functionally, probably functions as a manganese efflux pump. This chain is Putative manganese efflux pump MntP, found in Pelotomaculum thermopropionicum (strain DSM 13744 / JCM 10971 / SI).